A 268-amino-acid chain; its full sequence is Hydroxypyruvate/pyruvate aldolase (268 aa).

His48 serves as the catalytic Proton acceptor. 2 residues coordinate a divalent metal cation: Glu152 and Asp178.

Belongs to the HpcH/HpaI aldolase family. Mn(2+) serves as cofactor. Requires Mg(2+) as cofactor. Co(2+) is required as a cofactor.

It catalyses the reaction D-glyceraldehyde + 3-hydroxypyruvate = (3R,4S,5R)-3,4,5,6-tetrahydroxy-2-oxohexanoate. The catalysed reaction is D-glyceraldehyde + 3-hydroxypyruvate = 2-dehydro-D-gluconate. It carries out the reaction D-glyceraldehyde + 3-hydroxypyruvate = 2-dehydro-D-galactonate. The enzyme catalyses D-glyceraldehyde + pyruvate = 2-dehydro-3-deoxy-L-galactonate. It catalyses the reaction 2-dehydro-3-deoxy-D-gluconate = D-glyceraldehyde + pyruvate. Its function is as follows. Aldolase which can catalyze in vitro the aldolisation reaction between hydroxypyruvate (HPA) or pyruvate (PA) and D-glyceraldehyde (D-GA). The condensation of hydroxypyruvate and D-glyceraldehyde produces (3R,4S,5R)-3,4,5,6-tetrahydroxy-2-oxohexanoate as the major product, 2-dehydro-D-gluconate and 2-dehydro-D-galactonate. The condensation of pyruvate and D-glyceraldehyde produces 2-dehydro-3-deoxy-L-galactonate as the major product and 2-dehydro-3-deoxy-D-gluconate. Also catalyzes the retro-aldol type decarboxylation of oxaloacetate, a general property of known pyruvate aldolases. This Pseudomonas aeruginosa protein is Hydroxypyruvate/pyruvate aldolase.